Reading from the N-terminus, the 36-residue chain is Dolichyl-diphosphooligosaccharide--protein glycosyltransferase subunit 2 (36 aa).

This sequence belongs to the SWP1 family. As to quaternary structure, component of the oligosaccharyltransferase (OST) complex.

It is found in the endoplasmic reticulum. The protein localises to the endoplasmic reticulum membrane. The protein operates within protein modification; protein glycosylation. Functionally, subunit of the oligosaccharyl transferase (OST) complex that catalyzes the initial transfer of a defined glycan (Glc(3)Man(9)GlcNAc(2) in eukaryotes) from the lipid carrier dolichol-pyrophosphate to an asparagine residue within an Asn-X-Ser/Thr consensus motif in nascent polypeptide chains, the first step in protein N-glycosylation. N-glycosylation occurs cotranslationally and the complex associates with the Sec61 complex at the channel-forming translocon complex that mediates protein translocation across the endoplasmic reticulum (ER). All subunits are required for a maximal enzyme activity. This chain is Dolichyl-diphosphooligosaccharide--protein glycosyltransferase subunit 2, found in Gallus gallus (Chicken).